We begin with the raw amino-acid sequence, 126 residues long: DNA-directed RNA polymerase subunit omega (126 aa).

This sequence belongs to the RNA polymerase subunit omega family. The RNAP catalytic core consists of 2 alpha, 1 beta, 1 beta' and 1 omega subunit. When a sigma factor is associated with the core the holoenzyme is formed, which can initiate transcription.

It carries out the reaction RNA(n) + a ribonucleoside 5'-triphosphate = RNA(n+1) + diphosphate. Its function is as follows. Promotes RNA polymerase assembly. Latches the N- and C-terminal regions of the beta' subunit thereby facilitating its interaction with the beta and alpha subunits. The sequence is that of DNA-directed RNA polymerase subunit omega from Rickettsia felis (strain ATCC VR-1525 / URRWXCal2) (Rickettsia azadi).